We begin with the raw amino-acid sequence, 284 residues long: MPAPVSVRDDLCRLVALSPGDGRIAGLVRQVCARALSLPSLPCEVAVNEPESPAEAVVAEFAEQFSVDVSAITGEQRSLLWTHLGEDAFGAVVAMYIADFVPRVRAGLEALGVGKEYLGWVTGPISWDHNTDLSAAVFNGFLPAVARMRALDPVTSELVRLRGAAQHNCRVCKSLREVSALDAGGSETLYGEIERFDTSVLLDVRAKAALRYADALIWTPAHLAVDVAVEVRSRFSDDEAVELTFDIMRNASNKVAVSLGADAPRVQQGTERYRIGLDGQTVFG.

It to E.coli YnjA.

This is an uncharacterized protein from Mycobacterium tuberculosis (strain CDC 1551 / Oshkosh).